The sequence spans 236 residues: 1-(5-phosphoribosyl)-5-[(5-phosphoribosylamino)methylideneamino] imidazole-4-carboxamide isomerase (236 aa).

Catalysis depends on Asp-8, which acts as the Proton acceptor. Residue Asp-129 is the Proton donor of the active site.

The protein belongs to the HisA/HisF family.

It localises to the cytoplasm. The enzyme catalyses 1-(5-phospho-beta-D-ribosyl)-5-[(5-phospho-beta-D-ribosylamino)methylideneamino]imidazole-4-carboxamide = 5-[(5-phospho-1-deoxy-D-ribulos-1-ylimino)methylamino]-1-(5-phospho-beta-D-ribosyl)imidazole-4-carboxamide. It participates in amino-acid biosynthesis; L-histidine biosynthesis; L-histidine from 5-phospho-alpha-D-ribose 1-diphosphate: step 4/9. The polypeptide is 1-(5-phosphoribosyl)-5-[(5-phosphoribosylamino)methylideneamino] imidazole-4-carboxamide isomerase (Methanospirillum hungatei JF-1 (strain ATCC 27890 / DSM 864 / NBRC 100397 / JF-1)).